We begin with the raw amino-acid sequence, 586 residues long: Acyl-coenzyme A synthetase ACSM3, mitochondrial (586 aa).

A mitochondrion-targeting transit peptide spans Met-1–Ala-27. An N6-succinyllysine mark is found at Lys-73 and Lys-106. At Lys-157 the chain carries N6-acetyllysine. ATP contacts are provided by residues Thr-235–Lys-243, Glu-374–Thr-379, Asp-461, Arg-476, and Lys-572.

It belongs to the ATP-dependent AMP-binding enzyme family. Mg(2+) is required as a cofactor. The cofactor is Mn(2+).

The protein resides in the mitochondrion. It localises to the mitochondrion matrix. The catalysed reaction is a medium-chain fatty acid + ATP + CoA = a medium-chain fatty acyl-CoA + AMP + diphosphate. The enzyme catalyses propanoate + ATP + CoA = propanoyl-CoA + AMP + diphosphate. It carries out the reaction butanoate + ATP + CoA = butanoyl-CoA + AMP + diphosphate. It catalyses the reaction 2-methylpropanoate + ATP + CoA = 2-methylpropanoyl-CoA + AMP + diphosphate. The catalysed reaction is 2-methylbutanoate + ATP + CoA = 2-methylbutanoyl-CoA + AMP + diphosphate. The enzyme catalyses octanoate + ATP + CoA = octanoyl-CoA + AMP + diphosphate. Functionally, catalyzes the activation of fatty acids by CoA to produce an acyl-CoA, the first step in fatty acid metabolism. Capable of activating medium-chain fatty acids with a preference for isobutyrate among fatty acids with 2-6 carbon atoms. This is Acyl-coenzyme A synthetase ACSM3, mitochondrial (ACSM3) from Homo sapiens (Human).